The chain runs to 121 residues: Securin (121 aa).

The disordered stretch occupies residues 1-24 (RATEKSVKTNGPLKQKQTTFSAKK). 2 short sequence motifs (TEK-box) span residues 3–5 (TEK) and 26–28 (TEK). The disordered stretch occupies residues 93 to 121 (LGPPSPLNMPSPPWESDVLQSPSSILSTL). The SH3-binding motif lies at 95–105 (PPSPLNMPSPP). The segment covering 95 to 105 (PPSPLNMPSPP) has biased composition (pro residues). Ser-97 is subject to Phosphoserine; by CDK1. The span at 110–121 (VLQSPSSILSTL) shows a compositional bias: polar residues.

The protein belongs to the securin family. In terms of assembly, interacts with the caspase-like ESPL1, and prevents its protease activity probably by covering its active site. Interacts with p53/TP53 and blocks its activity probably by blocking its binding to DNA. Interacts with the Ku 70 kDa subunit of ds-DNA kinase. Interacts with PTTG1IP. Interacts with RPS10 and DNAJA1. In terms of processing, phosphorylated by CDK1 during mitosis. Phosphorylated in vitro by ds-DNA kinase. Post-translationally, ubiquitinated through 'Lys-11' linkage of ubiquitin moieties by the anaphase promoting complex (APC) at the onset of anaphase, conducting to its degradation. 'Lys-11'-linked ubiquitination is mediated by the E2 ligase UBE2C/UBCH10.

The protein localises to the cytoplasm. It localises to the nucleus. In terms of biological role, regulatory protein, which plays a central role in chromosome stability, in the p53/TP53 pathway, and DNA repair. Probably acts by blocking the action of key proteins. During the mitosis, it blocks Separase/ESPL1 function, preventing the proteolysis of the cohesin complex and the subsequent segregation of the chromosomes. At the onset of anaphase, it is ubiquitinated, conducting to its destruction and to the liberation of ESPL1. Its function is however not limited to a blocking activity, since it is required to activate ESPL1. Negatively regulates the transcriptional activity and related apoptosis activity of p53/TP53. The negative regulation of p53/TP53 may explain the strong transforming capability of the protein when it is overexpressed. May also play a role in DNA repair via its interaction with Ku, possibly by connecting DNA damage-response pathways with sister chromatid separation. The chain is Securin (PTTG1) from Sus scrofa (Pig).